The following is a 465-amino-acid chain: MGQPMRQEHDSIGGVDVPAAALWGAQTQRSLNNFAIGHQKIPAELIHALARIKQCCAAVNGRHGLLNDQQVALIERAGQAIQTGQQDDHFPLSVWQTGSGTQTNMNVNEVISNLAAQESGENLGSHRPLHPNDHINRSQSTNDVFPAAIHVAAALQLQQELLPELKRLIASLDAKAVAWQDIIKIGRTHLQDAVPLRLGDEVSAWRDRLSDGAHWLTTAHQDLLALPLGGTAVGSGLNTPDRFAHEVCAELASRTGSDFQPADNLFAVMAGHDSLVQTMAQLRRLAVTLLTIANDIRLLACGPRAGLGELLLPANEPGSSIMPGKVNPTQCEAMAMVCTQVIGMDAAVAAAGAGGHLQMNVYKPLIGYNLIEGIRLLQDACRCFRLNLLTGMEADRDRIAFYVERSLMLVTALTPEIGYEKACAIAQHAHRDGLTLREAAMQSGAITDERFDQLIDPAAMASPHR.

Substrate is bound by residues 99–101 (SGT), Arg127, 130–133 (HPND), 140–142 (STN), and Thr188. His189 (proton donor/acceptor) is an active-site residue. The active site involves Ser319. Residues Ser320 and 325–327 (KVN) each bind substrate.

This sequence belongs to the class-II fumarase/aspartase family. Fumarase subfamily. In terms of assembly, homotetramer.

It localises to the cytoplasm. The catalysed reaction is (S)-malate = fumarate + H2O. It functions in the pathway carbohydrate metabolism; tricarboxylic acid cycle; (S)-malate from fumarate: step 1/1. In terms of biological role, involved in the TCA cycle. Catalyzes the stereospecific interconversion of fumarate to L-malate. This is Fumarate hydratase class II from Parasynechococcus marenigrum (strain WH8102).